The chain runs to 159 residues: Fimbrial protein EcpB (159 aa).

Residues 1–6 constitute a propeptide, leader sequence; the sequence is MYKQKG. Phenylalanine 7 carries the N-methylphenylalanine modification. Residues 7–29 traverse the membrane as a helical segment; it reads FTLIELMIVIAIIGILAAIALPL. Cysteine 137 and cysteine 156 form a disulfide bridge.

The protein belongs to the N-Me-Phe pilin family.

It localises to the fimbrium. It is found in the membrane. The sequence is that of Fimbrial protein EcpB (ecpB) from Eikenella corrodens.